Reading from the N-terminus, the 373-residue chain is Alpha-1,3-mannosyl-glycoprotein 4-beta-N-acetylglucosaminyltransferase-like protein MGAT4D (373 aa).

The Cytoplasmic segment spans residues 1–5 (MKAKN). A helical; Signal-anchor for type II membrane protein transmembrane segment spans residues 6 to 26 (VNLLFAFVAVLLFGFSCFCIS). The Lumenal segment spans residues 27–373 (RMNQTNNQLI…REQHLKDNYY (347 aa)). Asn-29, Asn-54, and Asn-144 each carry an N-linked (GlcNAc...) asparagine glycan.

The protein belongs to the glycosyltransferase 54 family. Isoform 2 self-associates; specifically in the endoplasmic reticulum prior to its translocation to the Golgi. Isoform 1 and isoform 2 interact with MGAT1, MGAT3 and MAN2A2; isoform 2 interacts specifically with MGAT1 in the Golgi. Post-translationally, isoform 2 is N-glycosylated; consisting of high-mannose and/or hybrid glycans. Isoform 1 and isoform 2 are specifically expressed in testis. Isoform 2 is expressed in spermatocytes but not in spermatids. Isoform 1 is expressed in spermatids.

Its subcellular location is the endoplasmic reticulum membrane. The protein localises to the endoplasmic reticulum-Golgi intermediate compartment membrane. It is found in the golgi apparatus membrane. In terms of biological role, may play a role in male spermatogenesis. In vitro acts as inhibitor of MGAT1 activity causing cell surface proteins to carry mainly high mannose N-glycans. The function is mediated by its lumenal domain and occurs specifically in the Golgi. A catalytic glucosyltransferase activity is not detected. May be involved in regulation of Sertoli-germ cell interactions during specific stages of spermatogenesis. The chain is Alpha-1,3-mannosyl-glycoprotein 4-beta-N-acetylglucosaminyltransferase-like protein MGAT4D from Mus musculus (Mouse).